The chain runs to 323 residues: Synaptonemal complex central element protein 1 (323 aa).

A compositionally biased stretch (polar residues) spans 1–10; that stretch reads MAGRPGSSNA. Disordered stretches follow at residues 1-31 and 294-323; these read MAGR…SSQK and KQEE…PSTK. 2 stretches are compositionally biased toward basic and acidic residues: residues 20 to 31 and 313 to 323; these read DEARGQAESSQK and SEEKDQEPSTK. A coiled-coil region spans residues 25 to 290; that stretch reads QAESSQKIED…EKLGVQVLAQ (266 aa).

Belongs to the SYCE family. In terms of assembly, homodimer. Found in a complex with SYCP1 and SYCE2. Interacts with SYCP1, SYCE2 and SYCE3. Interacts with SIX6OS1.

It localises to the nucleus. The protein localises to the chromosome. Functionally, major component of the transverse central element of synaptonemal complexes (SCS), formed between homologous chromosomes during meiotic prophase. Requires SYCP1 in order to be incorporated into the central element. May have a role in the synaptonemal complex assembly, stabilization and recombination. This Bos taurus (Bovine) protein is Synaptonemal complex central element protein 1 (SYCE1).